The following is a 448-amino-acid chain: UDP-N-acetylglucosamine--dolichyl-phosphate N-acetylglucosaminephosphotransferase (448 aa).

A helical membrane pass occupies residues 24–44 (ALVAAVGFGIAGYLATDMLIP). Residues 58-60 (KDL) and E70 contribute to the UDP-N-acetyl-alpha-D-glucosamine site. 2 helical membrane-spanning segments follow: residues 72-92 (IGAI…PFIF) and 129-149 (YLSA…DDLF). K156 is a binding site for dolichyl phosphate. The next 2 membrane-spanning stretches (helical) occupy residues 157 to 177 (FFLP…DFGV) and 202 to 222 (YVYM…LAGV). 210–218 (IFCPNSINI) contributes to the dolichyl phosphate binding site. N217 is a Mg(2+) binding site. Residue N223 coordinates UDP-N-acetyl-alpha-D-glucosamine. The next 4 membrane-spanning stretches (helical) occupy residues 231 to 251 (IVLA…GPLA), 256 to 276 (HRFS…LWKW), 283 to 303 (VFVG…VGIL), and 309 to 329 (TMLL…PQLF). D287 contributes to the Mg(2+) binding site. 336–338 (RHR) contributes to the UDP-N-acetyl-alpha-D-glucosamine binding site. 2 helical membrane passes run 387-407 (EIIS…FGPM) and 419-439 (LQFC…AIIF).

This sequence belongs to the glycosyltransferase 4 family. Requires Mg(2+) as cofactor.

The protein resides in the endoplasmic reticulum membrane. The enzyme catalyses a di-trans,poly-cis-dolichyl phosphate + UDP-N-acetyl-alpha-D-glucosamine = an N-acetyl-alpha-D-glucosaminyl-diphospho-di-trans,poly-cis-dolichol + UMP. It participates in protein modification; protein glycosylation. Inhibited by natural nucleoside antibiotic tunicamycin, which acts as a structural analog and competitor of UDP-GlcNAc. In terms of biological role, UDP-N-acetylglucosamine--dolichyl-phosphate N-acetylglucosaminephosphotransferase that operates in the biosynthetic pathway of dolichol-linked oligosaccharides, the glycan precursors employed in protein asparagine (N)-glycosylation. The assembly of dolichol-linked oligosaccharides begins on the cytosolic side of the endoplasmic reticulum membrane and finishes in its lumen. The sequential addition of sugars to dolichol pyrophosphate produces dolichol-linked oligosaccharides containing fourteen sugars, including two GlcNAcs, nine mannoses and three glucoses. Once assembled, the oligosaccharide is transferred from the lipid to nascent proteins by oligosaccharyltransferases. Catalyzes the initial step of dolichol-linked oligosaccharide biosynthesis, transfering GlcNAc-1-P from cytosolic UDP-GlcNAc onto the carrier lipid dolichyl phosphate (P-dolichol), yielding GlcNAc-P-P-dolichol embedded in the cytoplasmic leaflet of the endoplasmic reticulum membrane. This Saccharomyces cerevisiae (strain ATCC 204508 / S288c) (Baker's yeast) protein is UDP-N-acetylglucosamine--dolichyl-phosphate N-acetylglucosaminephosphotransferase (ALG7).